An 880-amino-acid polypeptide reads, in one-letter code: Zinc-responsive transcriptional regulator ZAP1 (880 aa).

Disordered regions lie at residues 1-26 and 140-164; these read MDALTPRDSPKRDDSMATSAATAASA and NNFHSVASDPTSPQQNSKSDLPRRK. Residues 17-26 show a composition bias toward low complexity; the sequence is ATSAATAASA. Over residues 147–158 the composition is skewed to polar residues; sequence SDPTSPQQNSKS. Phosphoserine occurs at positions 156 and 166. The tract at residues 182 to 502 is zinc-responsive domain 1 (ZRD(AD1)); that stretch reads KPNPPPGSDD…LTNNDLNDLI (321 aa). Residues 207–402 form a transcription activation domain 1 (AD1) region; the sequence is HPKSEANIKQ…YEVPFGKHIN (196 aa). 2 disordered regions span residues 436–482 and 510–555; these read NRCN…VNNS and RFRN…PSSI. Over residues 442 to 456 the composition is skewed to low complexity; that stretch reads NNLNGSNNNTAGATS. Over residues 460-474 the composition is skewed to basic residues; sequence QHHHHRIQFHSHKPN. Position 515 is a phosphoserine (Ser515). The segment covering 545–555 has biased composition (low complexity); the sequence is SSLEDSLPSSI. The C2H2-type 1 zinc-finger motif lies at 579 to 604; it reads LKCKWKECPESCSSLFDLQRHLLKDH. Residues 579–641 form a zinc-responsive domain 2 (ZRD(AD2)) region; the sequence is LKCKWKECPE…SIVNHINCQH (63 aa). Cys581, Cys586, His599, His604, Cys618, Cys623, His636, and His641 together coordinate Zn(2+). The tract at residues 611 to 640 is transcription activation domain 2 (AD2); it reads HPMEPLACNWEDCDFLGDDTCSIVNHINCQ. Residues 616–641 form a C2H2-type 2; atypical zinc finger; that stretch reads LACNWEDCDFLGDDTCSIVNHINCQH. 5 consecutive C2H2-type zinc fingers follow at residues 705–730, 738–762, 768–790, 796–818, and 824–846; these read VICQWDGCNKSFSSAQELNDHLEAVH, YQCLWHDCHRTFPQRQKLIRHLKVH, YKCKTCKRCFSSEETLVQHTRTH, YKCHICNKKFAISSSLKIHIRTH, and LQCKICGKRFNESSNLSKHIKTH. The segment at residues 705 to 846 is a DNA-binding region (DNA-binding domain); it reads VICQWDGCNK…SNLSKHIKTH (142 aa).

The protein localises to the nucleus. With respect to regulation, active in zinc-limited cells and repressed in replete cells. Zinc controls ZAP1 DNA binding activity. Transcription regulator controlling zinc-responsive gene expression. Binds to zinc-responsive elements (ZREs) (consensus sequence 5'-ACCYYNAAGGT-3') in the promoter of target genes. Recruits SWI/SNF, SAGA, and Mediator complexes as coactivators in a zinc-responsive manner. Involved in zinc ion homeostasis by zinc-responsive transcriptional regulation of the zinc uptake system genes ZTR1 and ZTR2. Positively regulates ETR1 expression, affecting mitochondrial function. The sequence is that of Zinc-responsive transcriptional regulator ZAP1 (ZAP1) from Saccharomyces cerevisiae (strain ATCC 204508 / S288c) (Baker's yeast).